A 422-amino-acid polypeptide reads, in one-letter code: Adenylosuccinate synthetase (422 aa).

Residues 11 to 17 and 39 to 41 contribute to the GTP site; these read GDEGKGK and GHT. The Proton acceptor role is filled by Asp-12. Mg(2+) is bound by residues Asp-12 and Gly-39. Residues 12 to 15, 37 to 40, Thr-129, Arg-143, Asn-219, Thr-234, and Arg-298 contribute to the IMP site; these read DEGK and NAGH. The active-site Proton donor is His-40. 294–300 contributes to the substrate binding site; that stretch reads VTTGRKR. Residues Arg-300, 326-328, and 411-413 each bind GTP; these read KLD and GTG.

This sequence belongs to the adenylosuccinate synthetase family. Homodimer. It depends on Mg(2+) as a cofactor.

It localises to the cytoplasm. The enzyme catalyses IMP + L-aspartate + GTP = N(6)-(1,2-dicarboxyethyl)-AMP + GDP + phosphate + 2 H(+). Its pathway is purine metabolism; AMP biosynthesis via de novo pathway; AMP from IMP: step 1/2. Functionally, plays an important role in the de novo pathway and in the salvage pathway of purine nucleotide biosynthesis. Catalyzes the first committed step in the biosynthesis of AMP from IMP. In Talaromyces marneffei (strain ATCC 18224 / CBS 334.59 / QM 7333) (Penicillium marneffei), this protein is Adenylosuccinate synthetase.